The primary structure comprises 262 residues: Outer membrane protein assembly factor BamD (262 aa).

A signal peptide spans 1–18; sequence MRKIKSLALLAVAALVIG. Cys19 carries N-palmitoyl cysteine lipidation. A lipid anchor (S-diacylglycerol cysteine) is attached at Cys19.

The protein belongs to the BamD family. In terms of assembly, part of the Bam complex.

It localises to the cell outer membrane. Its function is as follows. Part of the outer membrane protein assembly complex, which is involved in assembly and insertion of beta-barrel proteins into the outer membrane. The chain is Outer membrane protein assembly factor BamD from Haemophilus influenzae (strain ATCC 51907 / DSM 11121 / KW20 / Rd).